The chain runs to 129 residues: Large ribosomal subunit protein bL19 (129 aa).

Belongs to the bacterial ribosomal protein bL19 family.

Functionally, this protein is located at the 30S-50S ribosomal subunit interface and may play a role in the structure and function of the aminoacyl-tRNA binding site. This Bordetella avium (strain 197N) protein is Large ribosomal subunit protein bL19.